The chain runs to 385 residues: Spermidine/putrescine import ATP-binding protein PotA (385 aa).

One can recognise an ABC transporter domain in the interval 6 to 238 (IEFKNVSKVF…PINHFVATFI (233 aa)). 40-47 (GASGSGKS) is a binding site for ATP.

Belongs to the ABC transporter superfamily. Spermidine/putrescine importer (TC 3.A.1.11.1) family. The complex is composed of two ATP-binding proteins (PotA), two transmembrane proteins (PotB and PotC) and a solute-binding protein (PotD).

The protein localises to the cell membrane. The catalysed reaction is ATP + H2O + polyamine-[polyamine-binding protein]Side 1 = ADP + phosphate + polyamineSide 2 + [polyamine-binding protein]Side 1.. In terms of biological role, part of the ABC transporter complex PotABCD involved in spermidine/putrescine import. Responsible for energy coupling to the transport system. In Streptococcus pneumoniae serotype 4 (strain ATCC BAA-334 / TIGR4), this protein is Spermidine/putrescine import ATP-binding protein PotA.